Here is a 378-residue protein sequence, read N- to C-terminus: Succinyl-diaminopimelate desuccinylase 2 (378 aa).

Histidine 68 is a binding site for Zn(2+). Residue aspartate 70 is part of the active site. Residue aspartate 101 participates in Zn(2+) binding. Residue glutamate 135 is the Proton acceptor of the active site. Zn(2+)-binding residues include glutamate 136, glutamate 164, and histidine 350.

The protein belongs to the peptidase M20A family. DapE subfamily. As to quaternary structure, homodimer. It depends on Zn(2+) as a cofactor. The cofactor is Co(2+).

The catalysed reaction is N-succinyl-(2S,6S)-2,6-diaminopimelate + H2O = (2S,6S)-2,6-diaminopimelate + succinate. It participates in amino-acid biosynthesis; L-lysine biosynthesis via DAP pathway; LL-2,6-diaminopimelate from (S)-tetrahydrodipicolinate (succinylase route): step 3/3. In terms of biological role, catalyzes the hydrolysis of N-succinyl-L,L-diaminopimelic acid (SDAP), forming succinate and LL-2,6-diaminopimelate (DAP), an intermediate involved in the bacterial biosynthesis of lysine and meso-diaminopimelic acid, an essential component of bacterial cell walls. The polypeptide is Succinyl-diaminopimelate desuccinylase 2 (Alteromonas mediterranea (strain DSM 17117 / CIP 110805 / LMG 28347 / Deep ecotype)).